We begin with the raw amino-acid sequence, 311 residues long: Serine/threonine-protein phosphatase PP1-1 (311 aa).

Mn(2+) contacts are provided by aspartate 53, histidine 55, aspartate 82, and asparagine 114. Histidine 115 (proton donor) is an active-site residue. Residues histidine 164 and histidine 238 each contribute to the Mn(2+) site.

This sequence belongs to the PPP phosphatase family. PP-6 (PP-V) subfamily. Inactivated in a complex with phosphatase methylesterase PPE1 (PP2Ai). Interacts with phosphatase 2A activator RRD1, which can reactivate PP2Ai by dissociating the catalytic subunit from the complex. Forms a ternary complex with RRD1-TAP42. The cofactor is Mn(2+).

It is found in the cytoplasm. It catalyses the reaction O-phospho-L-seryl-[protein] + H2O = L-seryl-[protein] + phosphate. The catalysed reaction is O-phospho-L-threonyl-[protein] + H2O = L-threonyl-[protein] + phosphate. Functionally, involved in the dephosphorylation of the large subunit of RNA polymerase II. Is required in late G1 for normal G1 cyclin expression, bud initiation and expression of certain genes that are periodically expressed during late G1. Associates with the SAP proteins in a cell cycle-dependent manner. The sequence is that of Serine/threonine-protein phosphatase PP1-1 (SIT4) from Saccharomyces cerevisiae (strain ATCC 204508 / S288c) (Baker's yeast).